The primary structure comprises 433 residues: L-2-hydroxyglutarate dehydrogenase, mitochondrial (433 aa).

This sequence belongs to the L2HGDH family. The cofactor is FAD.

It localises to the mitochondrion. It carries out the reaction (S)-2-hydroxyglutarate + A = 2-oxoglutarate + AH2. The protein is L-2-hydroxyglutarate dehydrogenase, mitochondrial of Caenorhabditis elegans.